Here is a 402-residue protein sequence, read N- to C-terminus: Enoyl-[acyl-carrier-protein] reductase [NADH] (402 aa).

NAD(+) is bound by residues 48-53 (GASSGF), 75-76 (FE), 112-113 (DV), and 141-142 (IA). Y231 contacts substrate. The active-site Proton donor is the Y241. NAD(+) contacts are provided by residues K250 and 279-281 (LVT).

It belongs to the TER reductase family. In terms of assembly, monomer.

It carries out the reaction a 2,3-saturated acyl-[ACP] + NAD(+) = a (2E)-enoyl-[ACP] + NADH + H(+). Its pathway is lipid metabolism; fatty acid biosynthesis. Functionally, involved in the final reduction of the elongation cycle of fatty acid synthesis (FAS II). Catalyzes the reduction of a carbon-carbon double bond in an enoyl moiety that is covalently linked to an acyl carrier protein (ACP). The sequence is that of Enoyl-[acyl-carrier-protein] reductase [NADH] from Vibrio cholerae serotype O1 (strain ATCC 39541 / Classical Ogawa 395 / O395).